The sequence spans 55 residues: MPALKSHVRPNSAAPARRQPWPCGSCVTAPVAVRIGAMGASPGPARRPHHRGCRA.

Residues 1-22 are disordered; that stretch reads MPALKSHVRPNSAAPARRQPWP.

This is an uncharacterized protein from Rhodobacter capsulatus (Rhodopseudomonas capsulata).